Here is a 586-residue protein sequence, read N- to C-terminus: Pectinesterase 1 (586 aa).

An N-terminal signal peptide occupies residues 1–49 (MDSVNSFKGYGKVDEAQDLALKKKTRKRLLLLSISVVVLIAVIIAAVVA). N-linked (GlcNAc...) asparagine glycans are attached at residues Asn57, Asn97, Asn154, Asn201, and Asn207. The RRLM cleavage motif motif lies at 250 to 253 (RRLM). The RRLL cleavage motif motif lies at 269–272 (RRLL). Residues Thr355 and Gln385 each coordinate substrate. The active-site Proton donor is Asp408. A disulfide bridge connects residues Cys422 and Cys442. The active-site Nucleophile is the Asp429. The N-linked (GlcNAc...) asparagine glycan is linked to Asn466. Residues Arg492 and Trp494 each contribute to the substrate site.

It in the N-terminal section; belongs to the PMEI family. In the C-terminal section; belongs to the pectinesterase family. Interacts with SBT6.1. In terms of tissue distribution, expressed in siliques.

The protein resides in the secreted. Its subcellular location is the cell wall. It is found in the golgi apparatus membrane. It carries out the reaction [(1-&gt;4)-alpha-D-galacturonosyl methyl ester](n) + n H2O = [(1-&gt;4)-alpha-D-galacturonosyl](n) + n methanol + n H(+). It functions in the pathway glycan metabolism; pectin degradation; 2-dehydro-3-deoxy-D-gluconate from pectin: step 1/5. Functionally, acts in the modification of cell walls via demethylesterification of cell wall pectin. Demethylates protein phosphatase 2A (PP2A) that have been reversibly carboxymethylated by LCMT1. Acts as a negative regulators of genes involved in salt stress response. The protein is Pectinesterase 1 (PME1) of Arabidopsis thaliana (Mouse-ear cress).